Reading from the N-terminus, the 124-residue chain is Putative C(50) carotenoid beta-cyclase subunit A (124 aa).

The next 3 membrane-spanning stretches (helical) occupy residues 1-21 (MIGL…LVID), 34-54 (AAAL…VLGV), and 78-98 (FEEV…AAGV).

It belongs to the lycopene beta-cyclase family. As to quaternary structure, may form a complex with LbtBC.

The protein localises to the cell membrane. Its pathway is carotenoid biosynthesis. In terms of biological role, involved in the biosynthesis of C(50) beta-cyclic carotenoids. May have C(50) carotenoid beta-cyclase activity and produce the C(50) beta-cyclic carotenoid C.p.450 from the C(50) carotenoid dihydrobisanhydrobacterioruberin (DH-BABR). The chain is Putative C(50) carotenoid beta-cyclase subunit A from Dietzia sp. (strain CQ4).